The chain runs to 451 residues: UDP-N-acetylmuramate--L-alanine ligase (451 aa).

110 to 116 contacts ATP; that stretch reads GTHGKTT.

Belongs to the MurCDEF family.

It is found in the cytoplasm. The enzyme catalyses UDP-N-acetyl-alpha-D-muramate + L-alanine + ATP = UDP-N-acetyl-alpha-D-muramoyl-L-alanine + ADP + phosphate + H(+). Its pathway is cell wall biogenesis; peptidoglycan biosynthesis. Its function is as follows. Cell wall formation. The protein is UDP-N-acetylmuramate--L-alanine ligase of Francisella tularensis subsp. tularensis (strain SCHU S4 / Schu 4).